Consider the following 663-residue polypeptide: Cyclic nucleotide-gated channel alpha-2 (663 aa).

The segment at 1–61 is disordered; sequence MTEKANGVKS…QLAEMDAPQQ (61 aa). The Cytoplasmic portion of the chain corresponds to 1-144; sequence MTEKANGVKS…PAGDWYYRWL (144 aa). The span at 12–23 shows a compositional bias: low complexity; that stretch reads PANNHNHHAPPA. A helical transmembrane segment spans residues 145 to 166; that stretch reads FLIALPVLYNWCLLVARACFSD. Over 167 to 176 the chain is Extracellular; that stretch reads LQKGYYIVWL. The helical transmembrane segment at 177–197 threads the bilayer; it reads VLDYVSDVVYIADLFIRLRTG. At 198–222 the chain is on the cytoplasmic side; that stretch reads FLEQGLLVKDTKKLRDNYIHTMQFK. Residues 223-241 traverse the membrane as a helical segment; sequence LDVASIIPTDLIYFAVGIH. The Extracellular portion of the chain corresponds to 242–246; sequence NPEVR. The helical transmembrane segment at 247–265 threads the bilayer; the sequence is FNRLLHFARMFEFFDRTET. Residues 266–272 are Cytoplasmic-facing; the sequence is RTSYPNI. The segment at 270–378 is ion conduction pathway; the sequence is PNIFRISNLI…GNVGSMISNM (109 aa). A helical transmembrane segment spans residues 273-296; sequence FRISNLILYILIIIHWNACIYYAI. At 297 to 319 the chain is on the extracellular side; the sequence is SKSIGFGVDTWVYPNITDPEYGY. Helical transmembrane passes span 320–354 and 355–379; these read LSREYIYCLYWSTLTLTTIGETPPPVKDEEYLFVI and FDFLIGVLIFATIVGNVGSMISNMN. The tract at residues 337–340 is selectivity filter; the sequence is TIGE. Positions 380-456 are C-linker; sequence ATRAEFQAKI…STLKKVRIFQ (77 aa). Residues 380-663 lie on the Cytoplasmic side of the membrane; that stretch reads ATRAEFQAKI…NSPEPPAEKP (284 aa). Residues 460–580 form a cyclic nucleotide-binding domain region; the sequence is AGLLVELVLK…EERGREILMK (121 aa). The 3',5'-cyclic GMP site is built by glycine 520, serine 523, arginine 536, and threonine 537. Arginine 536 and threonine 537 together coordinate 3',5'-cyclic AMP. Residues 597–651 adopt a coiled-coil conformation; sequence VQEKLEQLETNMDTLYTRFARLLAEYTGAQQKLKQRITVLETKMKQNNEDDSLSD. A disordered region spans residues 640–663; the sequence is MKQNNEDDSLSDGMNSPEPPAEKP.

The protein belongs to the cyclic nucleotide-gated cation channel (TC 1.A.1.5) family. CNGA2 subfamily. As to quaternary structure, the olfactory cyclic nucleotide-gated channel is an heterotetramer composed of CNGA2, CNGA4 and CNGB1b subunits with 2:1:1 stoichiometry. In terms of tissue distribution, olfactory neurons.

It localises to the cell projection. The protein localises to the cilium membrane. It catalyses the reaction Ca(2+)(in) = Ca(2+)(out). It carries out the reaction Na(+)(in) = Na(+)(out). The catalysed reaction is K(+)(in) = K(+)(out). The enzyme catalyses NH4(+)(in) = NH4(+)(out). It catalyses the reaction Rb(+)(in) = Rb(+)(out). It carries out the reaction Li(+)(in) = Li(+)(out). The catalysed reaction is Cs(+)(in) = Cs(+)(out). Pore-forming subunit of the olfactory cyclic nucleotide-gated channel. Operates in the cilia of olfactory sensory neurons where chemical stimulation of the odorant is converted to an electrical signal. Mediates odorant-induced cAMP-dependent Ca(2+) influx triggering neuron depolarization. The rise of intracellular Ca(2+) levels potentiates the olfactory response by activating Ca(2+)-dependent Cl(-) channels, but it also serves as a negative feedback signal to desensitize the channel for rapid adaptation to odorants. Conducts cAMP- and cGMP-gated ion currents, with permeability for monovalent and divalent cations. The chain is Cyclic nucleotide-gated channel alpha-2 from Bos taurus (Bovine).